The sequence spans 92 residues: Large ribosomal subunit protein bL36m (92 aa).

The transit peptide at 1 to 54 (MASLGRKFFAVGVLSRVFPSAFNAQKGLLKNASMFLTPAFRLSPSLLPWNFSRG) directs the protein to the mitochondrion.

The protein belongs to the bacterial ribosomal protein bL36 family. Component of the mitochondrial large ribosomal subunit (mt-LSU). Mature yeast 74S mitochondrial ribosomes consist of a small (37S) and a large (54S) subunit. The 37S small subunit contains a 15S ribosomal RNA (15S mt-rRNA) and at least 32 different proteins. The 54S large subunit contains a 21S rRNA (21S mt-rRNA) and at least 45 different proteins. bL36m has a zinc binding site.

It localises to the mitochondrion. Its function is as follows. Component of the mitochondrial ribosome (mitoribosome), a dedicated translation machinery responsible for the synthesis of mitochondrial genome-encoded proteins, including at least some of the essential transmembrane subunits of the mitochondrial respiratory chain. The mitoribosomes are attached to the mitochondrial inner membrane and translation products are cotranslationally integrated into the membrane. bL36m may be involved in a process influencing telomere capping. This Schizosaccharomyces pombe (strain 972 / ATCC 24843) (Fission yeast) protein is Large ribosomal subunit protein bL36m (rtc6).